Here is a 661-residue protein sequence, read N- to C-terminus: Vasorin (661 aa).

The first 19 residues, 1 to 19, serve as a signal peptide directing secretion; it reads MWHLLVWIILLATAQQMIT. The LRRNT domain occupies 20 to 50; sequence EGCPAGCQCNTPQTVFCLARKNSNFPRSVPP. Residues 20-563 are Extracellular-facing; the sequence is EGCPAGCQCN…VTQSQEGNLT (544 aa). LRR repeat units follow at residues 52 to 72, 75 to 96, 99 to 120, 123 to 144, 147 to 168, 169 to 189, 191 to 212, 215 to 237, 238 to 258, and 259 to 281; these read TLNLYVFENGISSIEESSFIG, GLHLLDLSHNQLSSLPGGVFRN, NLSNLDLTSNQLTEISADTFQG, RLERLYLNGNRIRSIHPEAFKG, SLLELKLSNNQLVTPPAFSLPH, LLLLDLSYNAIPVIQQGVFNA, NIESLRLAGLGLKEVPEELLSG, NLHELDLSDNQLDKVPPGLHGLT, KLNIAGNVGFSQIQVDDLSNL, and PALQELDLSGLSLQTLPKGLFRS. The N-linked (GlcNAc...) asparagine glycan is linked to Asn-99. The 54-residue stretch at 293–346 folds into the LRRCT domain; sequence NPFNCVCSLGWLSEWMRVSGVVLLRPDETRCHFPPKNAGKTLRQLRDSEYGCPA. Over residues 348-385 the composition is skewed to low complexity; that stretch reads TTIQMPSTMPPSTTTGPPTTTKHLQTEAPTTASTTTTT. Positions 348-395 are disordered; the sequence is TTIQMPSTMPPSTTTGPPTTTKHLQTEAPTTASTTTTTIPHQEQEEDT. The region spanning 403 to 440 is the EGF-like domain; that stretch reads EDTLCPPQTCLNGGSCHLDPTGQLECECPPGFQGTYCE. 3 disulfides stabilise this stretch: Cys-407/Cys-418, Cys-412/Cys-428, and Cys-430/Cys-439. The 89-residue stretch at 455 to 543 folds into the Fibronectin type-III domain; it reads EQVKIIEVTV…EEDLCTETHT (89 aa). 2 N-linked (GlcNAc...) asparagine glycosylation sites follow: Asn-518 and Asn-561. A helical transmembrane segment spans residues 564–584; it reads LVLVPAVAAGILLSAAVAAAA. The Cytoplasmic segment spans residues 585-661; the sequence is CYARRRKGKG…PTGRLPHSYF (77 aa). Residues 591-661 form a disordered region; that stretch reads KGKGHSVEDG…PTGRLPHSYF (71 aa). Residues 606 to 623 are compositionally biased toward basic and acidic residues; sequence DGVKKGLDGKGEVKKLSE.

It is found in the membrane. In terms of biological role, may act as an inhibitor of TGF-beta signaling. In Xenopus tropicalis (Western clawed frog), this protein is Vasorin (vasn).